A 284-amino-acid polypeptide reads, in one-letter code: MPASLIDGREISALRRAELKQRVLYHVEQGQRAPGLAVVLIGNDPASVIYVSNKRKACEEVGITSHSYDLPAETTQEKLIELINELNQSDKIDGILIQLPLPKHINERTIIEYIKPEKDVDGFHPYNLGRLAQRNPFLRPCTPLGIMNLLHHYELNVKRKHAVVIGASNIVGRPMSLELLLAGATVTICHKFTQQLQKFVEIADFLIVATGKMDVIATDWLREHQVVIDVGMHRLPDGSIRGDIDFKKAVEKVAWITPVPGGVGPMTIVTLLENTMMSAARLRE.

166-168 is a binding site for NADP(+); it reads GAS.

Belongs to the tetrahydrofolate dehydrogenase/cyclohydrolase family. In terms of assembly, homodimer.

It carries out the reaction (6R)-5,10-methylene-5,6,7,8-tetrahydrofolate + NADP(+) = (6R)-5,10-methenyltetrahydrofolate + NADPH. It catalyses the reaction (6R)-5,10-methenyltetrahydrofolate + H2O = (6R)-10-formyltetrahydrofolate + H(+). It participates in one-carbon metabolism; tetrahydrofolate interconversion. Catalyzes the oxidation of 5,10-methylenetetrahydrofolate to 5,10-methenyltetrahydrofolate and then the hydrolysis of 5,10-methenyltetrahydrofolate to 10-formyltetrahydrofolate. This chain is Bifunctional protein FolD, found in Legionella pneumophila subsp. pneumophila (strain Philadelphia 1 / ATCC 33152 / DSM 7513).